A 349-amino-acid chain; its full sequence is RxLR effector protein CRE15 (349 aa).

The signal sequence occupies residues 1–33 (MITFKRLSSARWGALLTSIAVLFFLAITKGADA). The RxLR-dEER signature appears at 46-62 (RRLRTTTADAYYASEDR).

It belongs to the RxLR effector family. Interacts directly with the potato ortholog of vascular highway 1 (VH1)-interacting kinase (VIK), encoding a predicted MEK kinase (MAP3K).

The protein localises to the secreted. The protein resides in the host cell membrane. Its function is as follows. Effector that promotes P.infestans virulence in Nicotiana benthamiana and potato. Attenuates cell death triggered by the pathogen-associated molecular pattern infestin 1 (INF1), indicating that the effector suppresses pattern-triggered immunity. However, it does not attenuate cell death triggered by a range of resistance proteins, suggesting that it specifically suppresses INF1-triggered cell death (ICD). Targets host MAP3K VIK in order to utilize or promote its ability to negatively regulate immunity. The protein is RxLR effector protein CRE15 of Phytophthora infestans (strain T30-4) (Potato late blight agent).